The chain runs to 342 residues: tRNA dimethylallyltransferase (342 aa).

Position 39 to 46 (39 to 46 (GPTGSGKT)) interacts with ATP. Position 41–46 (41–46 (TGSGKT)) interacts with substrate. The interaction with substrate tRNA stretch occupies residues 64-67 (DSMQ).

The protein belongs to the IPP transferase family. Monomer. The cofactor is Mg(2+).

It catalyses the reaction adenosine(37) in tRNA + dimethylallyl diphosphate = N(6)-dimethylallyladenosine(37) in tRNA + diphosphate. Functionally, catalyzes the transfer of a dimethylallyl group onto the adenine at position 37 in tRNAs that read codons beginning with uridine, leading to the formation of N6-(dimethylallyl)adenosine (i(6)A). This is tRNA dimethylallyltransferase from Chlamydia caviae (strain ATCC VR-813 / DSM 19441 / 03DC25 / GPIC) (Chlamydophila caviae).